The primary structure comprises 112 residues: MKLLGIFLVASFAFVLSFGEEMIEGENPLEDQRAELTSCFPVGHECDGDASNCNCCGDDVYCGCGWGRWNCKCKVADQSYAYGICKDKVNCPNRHLWPAKVCKKPCRRNCGG.

The signal sequence occupies residues 1–19 (MKLLGIFLVASFAFVLSFG). The propeptide occupies 20–33 (EEMIEGENPLEDQR). Intrachain disulfides connect cysteine 39-cysteine 56, cysteine 46-cysteine 62, cysteine 53-cysteine 85, cysteine 55-cysteine 73, cysteine 64-cysteine 71, cysteine 91-cysteine 106, and cysteine 102-cysteine 110. Glycine 111 carries the glycine amide modification.

This sequence belongs to the neurotoxin 04 (omega-agtx) family. 02 (Tx1) subfamily. Contains 7 disulfide bonds. As to expression, expressed by the venom gland.

It is found in the secreted. Functionally, reversible inhibitor of neuronal sodium channels (Nav1.2/ SCN2A) that binds in proximity to site 1 and displays increasing affinity as the membrane potential is depolarized. Induces excitatory symptoms and spastic paralysis in mice. The chain is Mu-ctenitoxin-Pn1a from Phoneutria nigriventer (Brazilian armed spider).